Here is a 150-residue protein sequence, read N- to C-terminus: Sec-independent protein translocase protein TatB (150 aa).

Residues 1–21 form a helical membrane-spanning segment; the sequence is MFDLSWSEIALVGVVALIVIG. A compositionally biased stretch (basic and acidic residues) spans 77 to 86; it reads KIDQAIDPDG. Residues 77–150 are disordered; sequence KIDQAIDPDG…RTDGSLPPQD (74 aa). A compositionally biased stretch (pro residues) spans 109-135; sequence AAPPSLPPQAPAQPVPPATGAAPPSPS.

It belongs to the TatB family. In terms of assembly, the Tat system comprises two distinct complexes: a TatABC complex, containing multiple copies of TatA, TatB and TatC subunits, and a separate TatA complex, containing only TatA subunits. Substrates initially bind to the TatABC complex, which probably triggers association of the separate TatA complex to form the active translocon.

It is found in the cell inner membrane. Its function is as follows. Part of the twin-arginine translocation (Tat) system that transports large folded proteins containing a characteristic twin-arginine motif in their signal peptide across membranes. Together with TatC, TatB is part of a receptor directly interacting with Tat signal peptides. TatB may form an oligomeric binding site that transiently accommodates folded Tat precursor proteins before their translocation. This Rhodospirillum rubrum (strain ATCC 11170 / ATH 1.1.1 / DSM 467 / LMG 4362 / NCIMB 8255 / S1) protein is Sec-independent protein translocase protein TatB.